The chain runs to 574 residues: Acetolactate synthase large subunit (574 aa).

E51 contributes to the thiamine diphosphate binding site. FAD is bound by residues R153, 261–282 (HGTYEANMAMHYADVILAIGVR), and 304–323 (DIDPTSISKTITAHIPIVGN). A thiamine pyrophosphate binding region spans residues 397 to 477 (QHQMFAALYY…ILILNLNNKS (81 aa)). Mg(2+)-binding residues include D448 and N475.

Belongs to the TPP enzyme family. Dimer of large and small chains. Requires Mg(2+) as cofactor. Thiamine diphosphate is required as a cofactor.

The enzyme catalyses 2 pyruvate + H(+) = (2S)-2-acetolactate + CO2. It participates in amino-acid biosynthesis; L-isoleucine biosynthesis; L-isoleucine from 2-oxobutanoate: step 1/4. It functions in the pathway amino-acid biosynthesis; L-valine biosynthesis; L-valine from pyruvate: step 1/4. The chain is Acetolactate synthase large subunit (ilvI) from Buchnera aphidicola subsp. Schlechtendalia chinensis.